The primary structure comprises 109 residues: Oncomodulin (109 aa).

N-acetylserine is present on serine 2. EF-hand domains are found at residues 39–74 (MSAS…FESG) and 78–109 (LTES…MVHS). Ca(2+) contacts are provided by aspartate 52, aspartate 54, serine 56, tyrosine 58, glutamate 63, aspartate 91, aspartate 93, aspartate 95, lysine 97, and glutamate 102.

This sequence belongs to the parvalbumin family. As to expression, abundant in the organ of Corti.

In terms of biological role, has some calmodulin-like activity with respect to enzyme activation and growth regulation. Binds two calcium ions. The polypeptide is Oncomodulin (OCM) (Cavia porcellus (Guinea pig)).